The chain runs to 100 residues: Transcription and mRNA export factor SUS1 (100 aa).

It belongs to the ENY2 family. Component of the nuclear pore complex (NPC)-associated TREX-2 complex (transcription and export complex 2), composed of at least SUS1, SAC3, THP1, SEM1, and CDC31. TREX-2 contains 2 SUS1 chains. The TREX-2 complex interacts with the nucleoporin NUP1. Component of the 1.8 MDa SAGA transcription coactivator-HAT complex. SAGA is built of 5 distinct domains with specialized functions. Within the SAGA complex, SUS1, SGF11, SGF73 and UBP8 form an additional subcomplex of SAGA called the DUB module (deubiquitination module). Interacts directly with THP1, SAC3, SGF11, and with the RNA polymerase II.

The protein localises to the nucleus. It is found in the nucleoplasm. The protein resides in the cytoplasm. Its subcellular location is the P-body. Involved in mRNA export coupled transcription activation by association with both the TREX-2 and the SAGA complexes. At the promoters, SAGA is required for recruitment of the basal transcription machinery. It influences RNA polymerase II transcriptional activity through different activities such as TBP interaction and promoter selectivity, interaction with transcription activators, and chromatin modification through histone acetylation and deubiquitination. Within the SAGA complex, participates in a subcomplex required for deubiquitination of H2B and for the maintenance of steady-state H3 methylation levels. The TREX-2 complex functions in docking export-competent ribonucleoprotein particles (mRNPs) to the nuclear entrance of the nuclear pore complex (nuclear basket). TREX-2 participates in mRNA export and accurate chromatin positioning in the nucleus by tethering genes to the nuclear periphery. May also be involved in cytoplasmic mRNA decay by interaction with components of P-bodies. This is Transcription and mRNA export factor SUS1 from Candida glabrata (strain ATCC 2001 / BCRC 20586 / JCM 3761 / NBRC 0622 / NRRL Y-65 / CBS 138) (Yeast).